A 114-amino-acid chain; its full sequence is Beta-microseminoprotein (114 aa).

The signal sequence occupies residues 1–20; sequence MNVLLGGFVIFATFVTLCNA. Disulfide bonds link cysteine 22/cysteine 70, cysteine 38/cysteine 62, cysteine 57/cysteine 93, cysteine 60/cysteine 69, and cysteine 84/cysteine 107.

It belongs to the beta-microseminoprotein family. In terms of assembly, homodimer; Interacts with PI16.

It localises to the secreted. The chain is Beta-microseminoprotein (MSMB) from Papio anubis (Olive baboon).